A 196-amino-acid chain; its full sequence is Vascular-related unknown protein 2 (196 aa).

A disordered region spans residues 84–130 (ANNINTNPKKRRIIHQHKEEEEEELQKGEEEEEDEEDTASSPSNKTK). Residues 103 to 121 (EEEEELQKGEEEEEDEEDT) are compositionally biased toward acidic residues.

Involved in the regulation of plant growth. In Arabidopsis thaliana (Mouse-ear cress), this protein is Vascular-related unknown protein 2.